A 645-amino-acid polypeptide reads, in one-letter code: Sodium-dependent phosphate transporter 2 (645 aa).

The Extracellular segment spans residues 1–5 (MAMDE). The chain crosses the membrane as a helical span at residues 6–26 (YLWMVILGFIIAFILAFSVGA). Over 27 to 46 (NDVANSFGTAVGSGVVTLRQ) the chain is Cytoplasmic. The helical transmembrane segment at 47–67 (ACILASIFETTGSVLLGAKVG) threads the bilayer. Residues 68–86 (ETIRKGIIDVNLYNNTVET) are Extracellular-facing. The N-linked (GlcNAc...) asparagine glycan is linked to Asn-81. The helical transmembrane segment at 87 to 107 (LMAGEVSAMVGSAVWQLIASF) threads the bilayer. The Cytoplasmic portion of the chain corresponds to 108-109 (LR). A helical membrane pass occupies residues 110–130 (FPISGTHCIVGATIGFSLVAI). The Extracellular portion of the chain corresponds to 131 to 142 (GTQGVQWMELVK). The chain crosses the membrane as a helical span at residues 143–163 (IVASWFISPLLSGFMSGVLFV). At 164 to 190 (LIRMFILKKEDPVPNGLRALPVFYAAT) the chain is on the cytoplasmic side. The helical transmembrane segment at 191–211 (IAINVFSIMYTGAPVMGLVLP) threads the bilayer. Residues 212-213 (MW) lie on the Extracellular side of the membrane. A helical membrane pass occupies residues 214 to 234 (AIALISFGVALLFALFVWLFV). Over 235–475 (CPWMRRKITG…EEKEEKDSPE (241 aa)) the chain is Cytoplasmic. Residues Ser-253, Ser-256, Ser-259, Ser-268, Ser-316, and Ser-379 each carry the phosphoserine modification. The interval 275–320 (PGAKAHDDSTVPLTGSAADPSGTSESMSGGHHPRAPYGRALSMTHG) is disordered. The disordered stretch occupies residues 448–471 (RLAPPLAEPEPPRDDPADEEKEEK). Residues 476–496 (VHLLFHFLQVLTACFGSFAHG) traverse the membrane as a helical segment. At 497 to 523 (GNDVSNAIGPLVALWLIYEQGAVLQEA) the chain is on the extracellular side. The chain crosses the membrane as a helical span at residues 524–544 (ATPVWLLFYGGVGICTGLWVW). Over 545–564 (GRRVIQTMGKDLTPITPSSG) the chain is Cytoplasmic. The chain crosses the membrane as a helical span at residues 565 to 579 (FTIELASAFTVVIAS). Residues 580 to 586 (NIGLPVS) are Extracellular-facing. A helical transmembrane segment spans residues 587 to 602 (TTHCKVGSVVAVGWIR). Topologically, residues 603–614 (SRKAVDWRLFRN) are cytoplasmic. A helical membrane pass occupies residues 615-635 (IFVAWFVTVPVAGLFSAAIMA). Residues 636-645 (LLIHGILPFV) lie on the Extracellular side of the membrane.

This sequence belongs to the inorganic phosphate transporter (PiT) (TC 2.A.20) family. As to quaternary structure, homodimer.

The protein localises to the cell membrane. It is found in the apical cell membrane. It catalyses the reaction 2 Na(+)(out) + phosphate(out) = 2 Na(+)(in) + phosphate(in). In terms of biological role, sodium-phosphate symporter which preferentially transports the monovalent form of phosphate with a stoichiometry of two sodium ions per phosphate ion. Plays a critical role in the determination of bone quality and strength by providing phosphate for bone mineralization. Required to maintain normal cerebrospinal fluid phosphate levels. Mediates phosphate-induced calcification of vascular smooth muscle cells (VCMCs) and can functionally compensate for loss of SLC20A1 in VCMCs. The sequence is that of Sodium-dependent phosphate transporter 2 (SLC20A2) from Bos taurus (Bovine).